The following is a 269-amino-acid chain: Fructose-2,6-bisphosphatase TIGAR (269 aa).

The Tele-phosphohistidine intermediate role is filled by H11. E89 serves as the catalytic Proton donor/acceptor.

It belongs to the phosphoglycerate mutase family. Interacts with HK2; the interaction increases hexokinase HK2 activity in a hypoxia- and HIF1A-dependent manner, resulting in the regulation of mitochondrial membrane potential, thus increasing NADPH production and decreasing intracellular ROS levels. As to expression, expressed in olfactory bulb, cerebellum, and cortex. Expressed in neurons and astrocytes (at protein level). Expressed in intestinal crypt.

It localises to the cytoplasm. The protein localises to the nucleus. Its subcellular location is the mitochondrion. It catalyses the reaction beta-D-fructose 2,6-bisphosphate + H2O = beta-D-fructose 6-phosphate + phosphate. In terms of biological role, fructose-bisphosphatase hydrolyzing fructose-2,6-bisphosphate as well as fructose-1,6-bisphosphate. Acts as a negative regulator of glycolysis by lowering intracellular levels of fructose-2,6-bisphosphate in a p53/TP53-dependent manner, resulting in the pentose phosphate pathway (PPP) activation and NADPH production. Contributes to the generation of reduced glutathione to cause a decrease in intracellular reactive oxygen species (ROS) content, correlating with its ability to protect cells from oxidative or metabolic stress-induced cell death. Plays a role in promoting protection against cell death during hypoxia by decreasing mitochondria ROS levels in a HK2-dependent manner through a mechanism that is independent of its fructose-bisphosphatase activity. In response to cardiac damage stress, mediates p53-induced inhibition of myocyte mitophagy through ROS levels reduction and the subsequent inactivation of BNIP3. Reduced mitophagy results in an enhanced apoptotic myocyte cell death, and exacerbates cardiac damage. Plays a role in adult intestinal regeneration; contributes to the growth, proliferation and survival of intestinal crypts following tissue ablation. Plays a neuroprotective role against ischemic brain damage by enhancing PPP flux and preserving mitochondria functions. Protects glioma cells from hypoxia- and ROS-induced cell death by inhibiting glycolysis and activating mitochondrial energy metabolism and oxygen consumption in a TKTL1-dependent and p53/TP53-independent manner. Plays a role in cancer cell survival by promoting DNA repair through activating PPP flux in a CDK5-ATM-dependent signaling pathway during hypoxia and/or genome stress-induced DNA damage responses. Involved in intestinal tumor progression. The protein is Fructose-2,6-bisphosphatase TIGAR of Mus musculus (Mouse).